Here is a 1679-residue protein sequence, read N- to C-terminus: AF4/FMR2 family member lilli (1679 aa).

Disordered stretches follow at residues 1-21 (MAQQ…SSIN), 55-78 (NYNM…QQGI), 124-305 (RSAP…EKDV), 406-539 (LHQL…GAQN), 580-609 (MGAG…SNKW), 733-755 (DSGT…AVGG), 783-1172 (QPTQ…TTPH), and 1197-1319 (TPAQ…LQIG). Residues 69-78 (REKIERQQGI) show a composition bias toward basic and acidic residues. Low complexity-rich tracts occupy residues 144–181 (SLGH…QQQQ) and 212–244 (PSSS…SSGG). Threonine 421 carries the post-translational modification Phosphothreonine. Over residues 429-442 (LKTEKNHSLEKQDS) the composition is skewed to basic and acidic residues. Residues 444–455 (LENDLELSESED) show a composition bias toward acidic residues. Phosphoserine is present on residues serine 451 and serine 453. A compositionally biased stretch (low complexity) spans 464-484 (SAGNSSNSSESDSSESGSESS). The segment covering 492–501 (HPNHQQHHHQ) has biased composition (basic residues). Low complexity predominate over residues 502-532 (LQQQQQQQQQQASMQQQQVLQQQQQHRPQPL). Gly residues predominate over residues 582–591 (AGSGSGGTLS). A compositionally biased stretch (polar residues) spans 598-609 (NKTPSPTESNKW). A compositionally biased stretch (low complexity) spans 733-752 (DSGTSASGSSSSSSSSSDSA). Polar residues predominate over residues 783 to 796 (QPTQSQKAPPSNSV). Over residues 810-820 (QRQKKPRKKKA) the composition is skewed to basic residues. A phosphoserine mark is found at serine 829 and serine 830. Positions 859-871 (KKGRGRPRKQQQS) form a DNA-binding region, a.T hook. Low complexity predominate over residues 868–906 (QQQSGGSGNLSSASAGSSSQTKGPTLTAAKKPLAKTPLA). Phosphoserine is present on residues serine 879 and serine 881. A compositionally biased stretch (polar residues) spans 917–927 (SQSSSNGNTPT). Low complexity-rich tracts occupy residues 957-973 (SSSA…SSSS) and 1001-1012 (GSGSSSPSSSGS). Residues 1019–1030 (TRSQVGSGQALA) are compositionally biased toward polar residues. The span at 1042–1068 (SQHSQHLSSSECSSSSGGCTAVCSSSS) shows a compositional bias: low complexity. A compositionally biased stretch (basic and acidic residues) spans 1073-1090 (EGRREKERERKPKSDKNK). Pro residues predominate over residues 1130–1140 (QPPPPQAPPAA). A compositionally biased stretch (polar residues) spans 1198–1213 (PAQQNGHLTPKDQATN). 2 stretches are compositionally biased toward basic and acidic residues: residues 1234–1251 (EHPV…EAKF) and 1260–1288 (FQLK…EQPP). Residue serine 1368 is modified to Phosphoserine. A Phosphothreonine modification is found at threonine 1370. A compositionally biased stretch (low complexity) spans 1569 to 1589 (GNTPSSISPSNSVGSQGSGSN). The segment at 1569-1594 (GNTPSSISPSNSVGSQGSGSNTPPGR) is disordered.

The protein belongs to the AF4 family.

It is found in the nucleus. Functionally, has a role in transcriptional regulation. Acts in parallel with the Ras/MAPK and the PI3K/PKB pathways in the control of cell identity and cellular growth. Essential for regulation of the cytoskeleton and cell growth but not for cell proliferation or growth rate. Required specifically for the microtubule-based basal transport of lipid droplets. Plays a partially redundant function downstream of Raf in cell fate specification in the developing eye. Pair-rule protein that regulates embryonic cellularization, gastrulation and segmentation. The sequence is that of AF4/FMR2 family member lilli from Drosophila erecta (Fruit fly).